A 384-amino-acid polypeptide reads, in one-letter code: uncharacterized protein (384 aa).

2 disordered regions span residues 133 to 257 (RQNS…TNQD) and 297 to 368 (ERTP…STAT). The span at 143–157 (PSTSSEPEPQPSTSS) shows a compositional bias: low complexity. The segment covering 302–315 (DQTDITDDSADWSE) has biased composition (acidic residues). Basic and acidic residues predominate over residues 316 to 342 (GETRRPSHSEVGERRLSRENNSEDPNR). Positions 343-363 (SRSRSRSRERRRRRPRVRPGR) are enriched in basic residues.

This is an uncharacterized protein from Gallid herpesvirus 2 (strain Chicken/Md5/ATCC VR-987) (GaHV-2).